The sequence spans 230 residues: RING finger protein 141 (230 aa).

Glycine 2 is lipidated: N-myristoyl glycine. The RING-type zinc-finger motif lies at 155–192; it reads CCICMDGRADLILPCAHSFCQKCIDKWSDRHRNCPICR.

Its subcellular location is the membrane. Functionally, may be involved in spermatogenesis. In Pongo abelii (Sumatran orangutan), this protein is RING finger protein 141 (RNF141).